A 513-amino-acid polypeptide reads, in one-letter code: ATP synthase subunit alpha (513 aa).

ATP is bound at residue 169 to 176; sequence GDRQTGKT.

The protein belongs to the ATPase alpha/beta chains family. In terms of assembly, F-type ATPases have 2 components, CF(1) - the catalytic core - and CF(0) - the membrane proton channel. CF(1) has five subunits: alpha(3), beta(3), gamma(1), delta(1), epsilon(1). CF(0) has three main subunits: a(1), b(2) and c(9-12). The alpha and beta chains form an alternating ring which encloses part of the gamma chain. CF(1) is attached to CF(0) by a central stalk formed by the gamma and epsilon chains, while a peripheral stalk is formed by the delta and b chains.

The protein localises to the cell inner membrane. The enzyme catalyses ATP + H2O + 4 H(+)(in) = ADP + phosphate + 5 H(+)(out). In terms of biological role, produces ATP from ADP in the presence of a proton gradient across the membrane. The alpha chain is a regulatory subunit. This Shewanella amazonensis (strain ATCC BAA-1098 / SB2B) protein is ATP synthase subunit alpha.